A 287-amino-acid chain; its full sequence is N-acetylmannosamine kinase (287 aa).

ATP-binding positions include 5–12 and 131–138; these read AIDIGGTK and GVGGGIII. Zn(2+) is bound by residues H155, C165, C167, and C172.

This sequence belongs to the ROK (NagC/XylR) family. NanK subfamily. In terms of assembly, homodimer.

The enzyme catalyses an N-acyl-D-mannosamine + ATP = an N-acyl-D-mannosamine 6-phosphate + ADP + H(+). Its pathway is amino-sugar metabolism; N-acetylneuraminate degradation; D-fructose 6-phosphate from N-acetylneuraminate: step 2/5. Its function is as follows. Catalyzes the phosphorylation of N-acetylmannosamine (ManNAc) to ManNAc-6-P. This chain is N-acetylmannosamine kinase, found in Vibrio cholerae serotype O1 (strain ATCC 39541 / Classical Ogawa 395 / O395).